A 361-amino-acid polypeptide reads, in one-letter code: Mitochondrial import receptor subunit TOM40 homolog (361 aa).

Positions 1–10 (MGNVLAASSP) are enriched in low complexity. The tract at residues 1-71 (MGNVLAASSP…AASAGGTADD (71 aa)) is disordered. Over residues 11-36 (PAGPPPPPAPPLVGLPPPPPSPPGFT) the composition is skewed to pro residues. Residues 40 to 52 (LGGGLGAGAGTGR) show a composition bias toward gly residues. Residues 59 to 71 (GTAAASAGGTADD) are compositionally biased toward low complexity.

This sequence belongs to the Tom40 family. Forms part of the preprotein translocase complex of the outer mitochondrial membrane (TOM complex) which consists of at least 7 different proteins (TOMM5, TOMM6, TOMM7, TOMM20, TOMM22, TOMM40 and TOMM70). Interacts with mitochondrial targeting sequences. Interacts with TIMM29; linking the TIM22 complex to the TOM complex. Forms a complex with BCAP31 (via C-terminus) which mediates the translocation of components of the mitochondrial membrane respiratory chain NADH dehydrogenase (Complex I) from the cytosol to the mitochondria. Interacts (via N-terminus) with CYP1A1 (via mitochondrial targeting signal); this interaction is required for CYP1A1 translocation across the mitochondrial outer membrane.

It is found in the mitochondrion outer membrane. Functionally, channel-forming protein essential for import of protein precursors into mitochondria. Plays a role in the assembly of the mitochondrial membrane respiratory chain NADH dehydrogenase (Complex I) by forming a complex with BCAP31 and mediating the translocation of Complex I components from the cytosol to the mitochondria. The chain is Mitochondrial import receptor subunit TOM40 homolog from Bos taurus (Bovine).